Here is a 201-residue protein sequence, read N- to C-terminus: UPF0637 protein LSEI_1198 (201 aa).

This sequence belongs to the UPF0637 family.

The sequence is that of UPF0637 protein LSEI_1198 from Lacticaseibacillus paracasei (strain ATCC 334 / BCRC 17002 / CCUG 31169 / CIP 107868 / KCTC 3260 / NRRL B-441) (Lactobacillus paracasei).